We begin with the raw amino-acid sequence, 654 residues long: Probable Xaa-Pro aminopeptidase P (654 aa).

The Mn(2+) site is built by Asp451, Asp462, Glu560, and Glu574.

It belongs to the peptidase M24B family. It depends on Mn(2+) as a cofactor.

It carries out the reaction Release of any N-terminal amino acid, including proline, that is linked to proline, even from a dipeptide or tripeptide.. Functionally, catalyzes the removal of a penultimate prolyl residue from the N-termini of peptides. This Botryotinia fuckeliana (strain B05.10) (Noble rot fungus) protein is Probable Xaa-Pro aminopeptidase P (ampp).